A 456-amino-acid chain; its full sequence is Acyl-CoA transferase FPSE_08120 (456 aa).

A mitochondrion-targeting transit peptide spans 1-33 (MARLLFSGQRLRPSFLRSYIRANPSSTPSATRA).

This sequence belongs to the CoA-transferase III family.

It localises to the mitochondrion. In terms of biological role, acyl-CoA transferase; part of the Fusarium detoxification of benzoxazolinone cluster involved in the degradation of benzoxazolinones produced by the host plant. Maize, wheat, and rye produce the 2 benzoxazinone phytoanticipins 2,4-dihy-droxy-7-methoxy-1,4-benzoxazin-3-one (DIMBOA) and 2,4-dihydroxy-1,4-benzoxazin-3-one (DIBOA) that, due to their inherent instability once released, spontaneously degrade to the more stable corresponding benzoxazolinones, 6-methoxy-2-benzoxazolinone (MBOA) and 2-benzoxazolinone (BOA), respectively. The first step in the detoxification of benzoxazolinones involves the hydrolysis of the cyclic ester bond of benzoxazolinones by the gamma-lactamase FDB1 to aminophenols. FDB1 is able to convert 2-benzoxazolinone (BOA) into 2-aminophenol (2-AP), as well as 6-methoxy-2-benzoxazolinone (MBOA) into 5-methoxy-2-aminophenol (2-AMP). The N-malonyltransferase FDB2 then metabolizes aminophenols via N-malonylation to non-toxic malonamic acids. FDB2 converts 2-AP into N-(2-hydroxyphenyl) malonamic acid (HPMA) and 2-AMP into N-(2-hydroxy-4-methoxyphenyl) malonamic acid (HMPMA). The cluster also contains 2 transcription factors (FDB3 and FPSE_08121), an aldo-keto reductase (FPSE_08125) that possibly associates with a ketone component of BOA and MBOA degradation, an esterase (FPSE_08126), an acyl-CoA transferase (FPSE_08120), a solute carrier protein (FPSE_08119) and a transmembrane transporter (FPSE_08127) proposed to shuttle metabolites of benzoxazolinone degradation. In Fusarium pseudograminearum (strain CS3096) (Wheat and barley crown-rot fungus), this protein is Acyl-CoA transferase FPSE_08120.